The chain runs to 501 residues: Endonuclease domain-containing 1 protein (501 aa).

The signal sequence occupies residues 1–21 (MGCARWLALGGLLALAGLLQA). K408 is modified (N6-acetyllysine).

Belongs to the DNA/RNA non-specific endonuclease family. As to quaternary structure, interacts with RNF26; this interaction is important to modulate innate immune signaling through the cGAS-STING pathway.

Its subcellular location is the secreted. In terms of biological role, may act as a DNase and a RNase. Plays a role in the modulation of innate immune signaling through the cGAS-STING pathway by interacting with RNF26. The chain is Endonuclease domain-containing 1 protein (Endod1) from Mus musculus (Mouse).